A 610-amino-acid chain; its full sequence is MDSPSTSESPLKKNTIQDFGESNMTESPQSKEEIDEPEEECSVCKNEIIDTTSLSDCCHEFCYDCIVGWLTKGSGPFCPMCKTPVSFIQRKGTDEKITVQQIKSEGEPAATASEDLVTEKRIVSRKIRSCRRLMNQIDEIIGATSSRSDSQKRKPRLEELNSMKQLCVSQLNSLQMLRDDIDHGAAKALIVSKAAFRRLIYERQVISEGLPDATNSLSKTEFRDNIDHYRAVLHSFLSVELKSLPAKTQPRVDNENSWYFYTLHDVAEGKDEEIINRIFSMIEDRGTRDLNAREVDAALNGLVSCRVVIAFIAELKSLINSRKSFLEWCGAITYRIRTDRGGESAGNDVVTVDDSIELEPEENRSNHRSRRFPVFTPFDRVFGSTMGHMYRGQPQAPLRLGPNATNPFRPAPLPVPSQLPIAGIPWAELTTSSAGAGSARSRGSDSVVEIDDDDDNDGVDVDDDDREDSDEPRTYSNSEEDSDEEIQVVERDDTIILDDSNRSLPKPVANGSADRKRKYEFPLEDHWKKAKTSQLPEGLVDDVQELIAKYNMPLTQSMNMLVGAAQEAIIRINKPMPSTSSAPDISKFKPDDMLQLASYLSRTGALSRRQ.

Residues 1–28 are compositionally biased toward polar residues; that stretch reads MDSPSTSESPLKKNTIQDFGESNMTESP. The tract at residues 1–36 is disordered; the sequence is MDSPSTSESPLKKNTIQDFGESNMTESPQSKEEIDE. The RING-type zinc-finger motif lies at 41 to 82; that stretch reads CSVCKNEIIDTTSLSDCCHEFCYDCIVGWLTKGSGPFCPMCK. 2 disordered regions span residues 390–411 and 431–515; these read YRGQ…FRPA and TSSA…SADR. Residues 432-447 are compositionally biased toward low complexity; sequence SSAGAGSARSRGSDSV. 2 stretches are compositionally biased toward acidic residues: residues 448 to 470 and 478 to 487; these read VEID…EDSD and SEEDSDEEIQ.

This is an uncharacterized protein from Caenorhabditis elegans.